A 477-amino-acid chain; its full sequence is PTS system glucose-specific EIICB component (477 aa).

A PTS EIIC type-1 domain is found at 1–388 (MFKNVFSSLQ…FNLKTPGREE (388 aa)). The next 9 helical transmembrane spans lie at 20 to 40 (VSVL…FTLI), 51 to 71 (TGGS…ALGF), 76 to 96 (GVAA…LSAV), 112 to 132 (NFSD…AYMF), 152 to 172 (FVPI…SLIW), 250 to 270 (LSGG…AIWH), 280 to 300 (IGSI…TEPI), 304 to 324 (FILV…LSFP), and 354 to 374 (IFLF…IFYF). One can recognise a PTS EIIB type-1 domain in the interval 399–477 (IEIAPYIVEA…TAIDEYINNI (79 aa)). The active-site Phosphocysteine intermediate; for EIIB activity is the cysteine 421. Cysteine 421 is subject to Phosphocysteine.

The protein localises to the cell inner membrane. It catalyses the reaction N(pros)-phospho-L-histidyl-[protein] + D-glucose(out) = D-glucose 6-phosphate(in) + L-histidyl-[protein]. Functionally, the phosphoenolpyruvate-dependent sugar phosphotransferase system (sugar PTS), a major carbohydrate active transport system, catalyzes the phosphorylation of incoming sugar substrates concomitantly with their translocation across the cell membrane. The enzyme II complex composed of PtsG and Crr is involved in glucose transport. The sequence is that of PTS system glucose-specific EIICB component (ptsG) from Buchnera aphidicola subsp. Schizaphis graminum (strain Sg).